The following is a 288-amino-acid chain: Ankyrin repeat and SOCS box protein 8 (288 aa).

The residue at position 17 (Ser-17) is a Phosphoserine. ANK repeat units follow at residues 52-81 (GTLKPLHCACMVSDADCVELLLEKGAEVNA), 85-113 (YNRTVLHYAAEKDEACVEVLLEYGANPNA), 117-146 (NRDTPLHWAAFKNNAECVRALLESGASVNA), and 150-179 (NNDTPLSWAAMKGNLESVSILLDYGAEVRV). One can recognise an SOCS box domain in the interval 235–288 (QLCEKLTVLCSAPGTLKTLARYAVRRSLGLQYLPDAVKGLPLPASLKEYLLLLE).

Belongs to the ankyrin SOCS box (ASB) family. In terms of assembly, interacts with TBK1; this interaction promotes TBK1 proteasomal degradation. Phosphorylated by TBK1.

The protein resides in the cytoplasm. Its pathway is protein modification; protein ubiquitination. In terms of biological role, may be a substrate-recognition component of a SCF-like ECS (Elongin-Cullin-SOCS-box protein) E3 ubiquitin-protein ligase complex which mediates the ubiquitination and subsequent proteasomal degradation of target proteins. Inhibits IFN-beta production through the IRF3 signaling pathway by targeting TBK1 via 'Lys-48'-linked ubiquitination, leading to its proteasomal degradation. This chain is Ankyrin repeat and SOCS box protein 8 (ASB8), found in Macaca fascicularis (Crab-eating macaque).